We begin with the raw amino-acid sequence, 276 residues long: Large ribosomal subunit protein uL2 (276 aa).

The tract at residues 225–276 (VMNPVDHPHGGGEGKTAAGRDPVSPWGTPTKGYRTRSNKRTDSMIVQKRHKR) is disordered.

It belongs to the universal ribosomal protein uL2 family. As to quaternary structure, part of the 50S ribosomal subunit. Forms a bridge to the 30S subunit in the 70S ribosome.

Functionally, one of the primary rRNA binding proteins. Required for association of the 30S and 50S subunits to form the 70S ribosome, for tRNA binding and peptide bond formation. It has been suggested to have peptidyltransferase activity; this is somewhat controversial. Makes several contacts with the 16S rRNA in the 70S ribosome. The sequence is that of Large ribosomal subunit protein uL2 from Cupriavidus taiwanensis (strain DSM 17343 / BCRC 17206 / CCUG 44338 / CIP 107171 / LMG 19424 / R1) (Ralstonia taiwanensis (strain LMG 19424)).